Here is a 414-residue protein sequence, read N- to C-terminus: Arrestin domain-containing protein 3 (414 aa).

2 consecutive short sequence motifs (PPxY motif) follow at residues 346–349 (PPSY) and 391–394 (PPLY). The disordered stretch occupies residues 393-414 (LYSEIDPNPDQSADDRPSCPSR). Residues 405 to 414 (ADDRPSCPSR) are compositionally biased toward basic and acidic residues.

This sequence belongs to the arrestin family. Interacts (via PPxY motifs) with NEDD4 (via WW domains). Interacts with ADRB2. Interacts with ADRB3. Interacts with HGS (via PPxY motifs). Does not bind TXN (thioredoxin). Interacts with ITCH.

It localises to the cytoplasm. It is found in the cell membrane. The protein localises to the lysosome. Its subcellular location is the endosome. The protein resides in the early endosome. In terms of biological role, adapter protein that plays a role in regulating cell-surface expression of adrenergic receptors and probably also other G protein-coupled receptors. Plays a role in NEDD4-mediated ubiquitination and endocytosis af activated ADRB2 and subsequent ADRB2 degradation. May recruit NEDD4 to ADRB2. Alternatively, may function as adapter protein that does not play a major role in recruiting NEDD4 to ADRB2, but rather plays a role in a targeting ADRB2 to endosomes. The chain is Arrestin domain-containing protein 3 (ARRDC3) from Pongo abelii (Sumatran orangutan).